The sequence spans 750 residues: MIIRSPEPEVKIVVDRDPIKTSFEAWARPGHFSRTIAKGPDTTTWIWNLHADAHDFDSHTSDLEEISRKVFSAHFGQLSIIFLWLSGMYFHGARFSNYEAWLSDPTHIRPSAQVVWPIVGQEILNGDVGGGFRGIQITSGFFQIWRASGITSELQLYCTAIGALVFAALMLFAGWFHYHKAAPKLAWFQDVESMLNHHLAGLLGLGSLSWAGHQIHVSLPINQFLDAGVDPKEIPLPHEFILNRDLLAQLYPSFAEGATPFFTLNWSKYAEFLTFRGGLDPITGGLWLSDIAHHHLAIAILFLIAGHMYRTNWGIGHGLKDILEAHKGPFTGQGHKGLYEILTTSWHAQLALNLAMLGSLTIVVAHHMYSMPPYPYLATDYGTQLSLFTHHMWIGGFLIVGAAAHAAIFMVRDYDPTTRYNDLLDRVLRHRDAIISHLNWACIFLGFHSFGLYIHNDTMSALGRPQDMFSDTAIQLQPIFAQWVQNTHALAPVATAPGATTGTSLAWGGGELVAVGGKVALLPIPLGTADFLVHHIHAFTIHVTVLILLKGVLFARSSRLIPDKANLGFRFPCDGPGRGGTCQVSAWDHVFLGLFWMYNSISVVIFHFSWKMQSDVWGSISDQGVVTHITGGNFAQSSITINGWLRDFLWAQASQVIQSYGSSLSAYGLFFLGAHFVWAFSLMFLFSGRGYWQELIESIVWAHNKLKVAPATQPRALSIVQGRAVGVTHYLLGGIATTWAFFLARIIAVG.

A run of 8 helical transmembrane segments spans residues 70-93 (VFSA…FHGA), 156-179 (LYCT…FHYH), 195-219 (LNHH…HVSL), 291-309 (IAHH…GHMY), 346-369 (WHAQ…HHMY), 385-411 (LSLF…IFMV), 433-455 (AIIS…LYIH), and 531-549 (FLVH…LILL). [4Fe-4S] cluster contacts are provided by Cys-573 and Cys-582. The next 2 helical transmembrane spans lie at 589-610 (HVFL…HFSW) and 664-686 (LSAY…MFLF). His-675 contacts chlorophyll a'. Chlorophyll a is bound by residues Met-683 and Tyr-691. Trp-692 provides a ligand contact to phylloquinone. The chain crosses the membrane as a helical span at residues 724–744 (AVGVTHYLLGGIATTWAFFLA).

This sequence belongs to the PsaA/PsaB family. In terms of assembly, the PsaA/B heterodimer binds the P700 chlorophyll special pair and subsequent electron acceptors. PSI consists of a core antenna complex that captures photons, and an electron transfer chain that converts photonic excitation into a charge separation. The eukaryotic PSI reaction center is composed of at least 11 subunits. The cofactor is P700 is a chlorophyll a/chlorophyll a' dimer, A0 is one or more chlorophyll a, A1 is one or both phylloquinones and FX is a shared 4Fe-4S iron-sulfur center..

The protein localises to the plastid. It localises to the chloroplast thylakoid membrane. The enzyme catalyses reduced [plastocyanin] + hnu + oxidized [2Fe-2S]-[ferredoxin] = oxidized [plastocyanin] + reduced [2Fe-2S]-[ferredoxin]. PsaA and PsaB bind P700, the primary electron donor of photosystem I (PSI), as well as the electron acceptors A0, A1 and FX. PSI is a plastocyanin-ferredoxin oxidoreductase, converting photonic excitation into a charge separation, which transfers an electron from the donor P700 chlorophyll pair to the spectroscopically characterized acceptors A0, A1, FX, FA and FB in turn. Oxidized P700 is reduced on the lumenal side of the thylakoid membrane by plastocyanin. The polypeptide is Photosystem I P700 chlorophyll a apoprotein A1 (Acorus calamus (Sweet flag)).